We begin with the raw amino-acid sequence, 184 residues long: Structural protein V8 (184 aa).

Positions 14–35 are disordered; the sequence is IYNKSNTLTNTPSNPTGNTNTL.

The protein belongs to the sputnik virus V6 family.

It is found in the virion. This Sputnik virophage protein is Structural protein V8.